The following is a 689-amino-acid chain: Glycine--tRNA ligase beta subunit (689 aa).

It belongs to the class-II aminoacyl-tRNA synthetase family. Tetramer of two alpha and two beta subunits.

It is found in the cytoplasm. It catalyses the reaction tRNA(Gly) + glycine + ATP = glycyl-tRNA(Gly) + AMP + diphosphate. The protein is Glycine--tRNA ligase beta subunit of Lacticaseibacillus casei (strain BL23) (Lactobacillus casei).